Consider the following 387-residue polypeptide: F-box protein At5g41490 (387 aa).

Positions 2 to 47 (ATMITNLRRDLIEEIISRVPLRSMKAVRLTCKSWNNISKSEIFTKM) constitute an F-box domain.

The polypeptide is F-box protein At5g41490 (Arabidopsis thaliana (Mouse-ear cress)).